The following is a 1015-amino-acid chain: MSGGLFYNPFLRPNKGLLKKPDKEYLRLIPKCFQTPGAAGVVDVRGPQPPLCFYQDSLTVVGGDEDGKGMWWRQRAQEGTARPEADTHGSPLDFHVYDILETVYTHEKCAVIPSDKQGYVVPCGIVIKLLGRRKADGASVCVNVFGQQAYFYASAPQGLDVEFAVLSALKASTFDRRTPCRVSVEKVTRRSIMGYGNHAGDYHKITLSHPNSVCHVATWLQDKHGCRIFEANVDATRRFVLDNDFVTFGWYSCRRAIPRLQHRDSYAELEYDCEVGDLSVRREDSSWPSYQALAFDIECLGEEGFPTATNEADLILQISCVLWSTGEEAGRYRRILLTLGTCEDIEGVEVYEFPSELDMLYAFFQLIRDLSVEIVTGYNVANFDWPYILDRARHIYSINPASLGKIRAGGVCEVRRPHDAGKGFLRANTKVRITGLIPIDMYAVCRDKLSLSDYKLDTVARHLLGAKKEDVHYKEIPRLFAAGPEGRRRLGMYCVQDSALVMDLLNHFVIHVEVAEIAKIAHIPCRRVLDDGQQIRVFSCLLAAAQKENFILPMPSASDRDGYQGATVIQPLSGFYNSPVLVVDFASLYPSIIQAHNLCYSTMITPGEEHRLAGLRPGEDYESFRLTGGVYHFVKKHVHESFLASLLTSWLAKRKAIKKLLAACEDPRQRTILDKQQLAIKCTCNAVYGFTGVANGLFPCLSIAETVTLQGRTMLERAKAFVEALSPANLQALAPSPDAWAPLNPEGQLRVIYGDTDSLFIECRGFSESETLRFADALAAHTTRSLFVAPISLEAEKTFSCLMLITKKRYVGVLTDGKTLMKGVELVRKTACKFVQTRCRRVLDLVLADARVKEAASLLSHRPFQESFTQGLPVGFLPVIDILNQAYTDLREGRVPMGELCFSTELSRKLSAYKSTQMPHLAVYQKFVERNEELPQIHDRIQYVFVEPKGGVKGARKTEMAEDPAYAERHGVPVAVDHYFDKLLQGAANILQCLFDNNSGAALSVLQNFTARPPF.

Belongs to the DNA polymerase type-B family. As to quaternary structure, forms a complex with the ssDNA-binding protein BALF2, the DNA polymerase processivity factor BMRF1, and the alkaline exonuclease BGLF5. Interacts with the putative helicase-primase complex composed of BBLF4, BSLF1 and BBLF2/3 proteins; these interactions may coordinate leading and lagging strand DNA synthesis at the replication fork.

It localises to the host nucleus. The catalysed reaction is DNA(n) + a 2'-deoxyribonucleoside 5'-triphosphate = DNA(n+1) + diphosphate. Replicates viral genomic DNA in the late phase of lytic infection, producing long concatemeric DNA. The replication complex is composed of six viral proteins: the DNA polymerase, processivity factor, primase, primase-associated factor, helicase, and ssDNA-binding protein. This chain is DNA polymerase catalytic subunit, found in Epstein-Barr virus (strain B95-8) (HHV-4).